The primary structure comprises 497 residues: D-gluconate dehydratase (497 aa).

Glu-303 contacts Mg(2+). His-305 acts as the Proton donor in catalysis. Glu-329 and Glu-355 together coordinate Mg(2+). The active-site Proton acceptor is the His-405.

Belongs to the mandelate racemase/muconate lactonizing enzyme family. GaD subfamily. Requires Mg(2+) as cofactor.

It carries out the reaction D-gluconate = 2-dehydro-3-deoxy-D-gluconate + H2O. Its pathway is carbohydrate acid metabolism; D-gluconate degradation. Involved in the degradation of glucose via the Entner-Doudoroff pathway. Catalyzes the dehydration of gluconate to produce 2-keto-3-deoxygluconate (KDG). It is not able to use D-galactonate as substrate. This chain is D-gluconate dehydratase (gad), found in Thermoproteus tenax.